A 395-amino-acid polypeptide reads, in one-letter code: S-adenosylmethionine synthase (395 aa).

H16 provides a ligand contact to ATP. A Mg(2+)-binding site is contributed by D18. E44 is a K(+) binding site. L-methionine contacts are provided by E57 and Q100. The interval 100–110 is flexible loop; sequence QSPDIAQGVDR. ATP-binding positions include 167-169, 233-234, D242, 248-249, A265, and K269; these read DAK, RF, and RK. D242 is an L-methionine binding site. K273 lines the L-methionine pocket.

Belongs to the AdoMet synthase family. As to quaternary structure, homotetramer; dimer of dimers. It depends on Mg(2+) as a cofactor. Requires K(+) as cofactor.

The protein resides in the cytoplasm. The catalysed reaction is L-methionine + ATP + H2O = S-adenosyl-L-methionine + phosphate + diphosphate. It participates in amino-acid biosynthesis; S-adenosyl-L-methionine biosynthesis; S-adenosyl-L-methionine from L-methionine: step 1/1. Its function is as follows. Catalyzes the formation of S-adenosylmethionine (AdoMet) from methionine and ATP. The overall synthetic reaction is composed of two sequential steps, AdoMet formation and the subsequent tripolyphosphate hydrolysis which occurs prior to release of AdoMet from the enzyme. This Burkholderia cenocepacia (strain HI2424) protein is S-adenosylmethionine synthase.